The chain runs to 86 residues: uncharacterized protein (86 aa).

Transmembrane regions (helical) follow at residues 21–43 (VFWV…EATA) and 53–75 (FWYA…YFYF).

The protein localises to the cell membrane. This is an uncharacterized protein from Archaeoglobus fulgidus (strain ATCC 49558 / DSM 4304 / JCM 9628 / NBRC 100126 / VC-16).